The primary structure comprises 322 residues: N-acetyl-gamma-glutamyl-phosphate reductase (322 aa).

Cys-132 is a catalytic residue.

Belongs to the NAGSA dehydrogenase family. Type 1 subfamily.

It localises to the cytoplasm. The enzyme catalyses N-acetyl-L-glutamate 5-semialdehyde + phosphate + NADP(+) = N-acetyl-L-glutamyl 5-phosphate + NADPH + H(+). Its pathway is amino-acid biosynthesis; L-arginine biosynthesis; N(2)-acetyl-L-ornithine from L-glutamate: step 3/4. Catalyzes the NADPH-dependent reduction of N-acetyl-5-glutamyl phosphate to yield N-acetyl-L-glutamate 5-semialdehyde. In Bacteroides fragilis (strain YCH46), this protein is N-acetyl-gamma-glutamyl-phosphate reductase.